The sequence spans 375 residues: Carbamoyl phosphate synthase small chain (375 aa).

The interval 1-184 (MVSLYLENGL…LDYKPFDEKT (184 aa)) is CPSase. Positions 44, 240, and 242 each coordinate L-glutamine. The region spanning 188 to 375 (IIAVLDFGAK…KEFVELLKDF (188 aa)) is the Glutamine amidotransferase type-1 domain. The Nucleophile role is filled by Cys268. L-glutamine is bound by residues Leu269, Gln272, Asn310, and Tyr313. Residues His351 and Glu353 contribute to the active site.

The protein belongs to the CarA family. As to quaternary structure, composed of two chains; the small (or glutamine) chain promotes the hydrolysis of glutamine to ammonia, which is used by the large (or ammonia) chain to synthesize carbamoyl phosphate. Tetramer of heterodimers (alpha,beta)4.

The enzyme catalyses hydrogencarbonate + L-glutamine + 2 ATP + H2O = carbamoyl phosphate + L-glutamate + 2 ADP + phosphate + 2 H(+). The catalysed reaction is L-glutamine + H2O = L-glutamate + NH4(+). It functions in the pathway amino-acid biosynthesis; L-arginine biosynthesis; carbamoyl phosphate from bicarbonate: step 1/1. The protein operates within pyrimidine metabolism; UMP biosynthesis via de novo pathway; (S)-dihydroorotate from bicarbonate: step 1/3. Small subunit of the glutamine-dependent carbamoyl phosphate synthetase (CPSase). CPSase catalyzes the formation of carbamoyl phosphate from the ammonia moiety of glutamine, carbonate, and phosphate donated by ATP, constituting the first step of 2 biosynthetic pathways, one leading to arginine and/or urea and the other to pyrimidine nucleotides. The small subunit (glutamine amidotransferase) binds and cleaves glutamine to supply the large subunit with the substrate ammonia. The sequence is that of Carbamoyl phosphate synthase small chain from Helicobacter pylori (strain ATCC 700392 / 26695) (Campylobacter pylori).